A 277-amino-acid chain; its full sequence is Phosphate import ATP-binding protein PstB 2 (277 aa).

Residues 31 to 272 (IEVPGLSLFY…PAKKQTEDYI (242 aa)) form the ABC transporter domain. 63–70 (GPSGCGKS) is an ATP binding site.

This sequence belongs to the ABC transporter superfamily. Phosphate importer (TC 3.A.1.7) family. In terms of assembly, the complex is composed of two ATP-binding proteins (PstB), two transmembrane proteins (PstC and PstA) and a solute-binding protein (PstS).

The protein resides in the cell inner membrane. The enzyme catalyses phosphate(out) + ATP + H2O = ADP + 2 phosphate(in) + H(+). In terms of biological role, part of the ABC transporter complex PstSACB involved in phosphate import. Responsible for energy coupling to the transport system. The chain is Phosphate import ATP-binding protein PstB 2 from Pseudomonas syringae pv. tomato (strain ATCC BAA-871 / DC3000).